The following is a 694-amino-acid chain: Outer dynein arm-docking complex subunit 1 (694 aa).

Coiled coils occupy residues glutamate 27 to asparagine 192 and arginine 222 to glutamine 259. Residues arginine 271 to glutamate 290 are disordered. Residues asparagine 339–leucine 418 adopt a coiled-coil conformation. Disordered regions lie at residues glutamine 531–serine 550 and serine 571–asparagine 694. Phosphoserine is present on residues serine 536, serine 542, serine 543, and serine 545. Residues threonine 628 to threonine 642 show a composition bias toward low complexity. Residues serine 655 to glutamine 672 are compositionally biased toward polar residues. A compositionally biased stretch (low complexity) spans threonine 673 to serine 687.

It belongs to the ODA1/DCC2 family. Component of the outer dynein arm-docking complex along with ODAD2, ODAD3, ODAD4 and CLXN. Interacts with ODAD3. Interacts with ODAD4; this interaction may facilitate the recruitment and/or attachment of outer dynein arm docking complex proteins,including ODAD1, ODAD3, and ODAD4 to ciliary axonemes. Interacts with DNAH9. Interacts with MNS1. Interacts with PIERCE1 and PIERCE2; the interactions link the outer dynein arms docking complex (ODA-DC) to the internal microtubule inner proteins (MIP) in cilium axoneme.

The protein localises to the cytoplasm. It localises to the cytoskeleton. Its subcellular location is the cilium axoneme. Its function is as follows. Component of the outer dynein arm-docking complex that mediates outer dynein arms (ODA) binding onto the doublet microtubule. Involved in mediating assembly of both ODAs and their axonemal docking complex onto ciliary microtubules. This chain is Outer dynein arm-docking complex subunit 1 (Odad1), found in Rattus norvegicus (Rat).